A 120-amino-acid polypeptide reads, in one-letter code: Flagellar protein FliT (120 aa).

The required for homodimerization stretch occupies residues 1–50; the sequence is MTNFIPSLTDWHALHALSITMLDLAHSGKWDELIEQEMNYVQLVEGIARN. Residues 59 to 97 are fliD binding; sequence LINQAKEILNAVLRNEAELKTLLQHRMEELRQLIDQTGK.

The protein belongs to the FliT family. Homodimer. Interacts with FliD and FlhC.

The protein resides in the cytoplasm. It localises to the cytosol. In terms of biological role, dual-function protein that regulates the transcription of class 2 flagellar operons and that also acts as an export chaperone for the filament-capping protein FliD. As a transcriptional regulator, acts as an anti-FlhDC factor; it directly binds FlhC, thus inhibiting the binding of the FlhC/FlhD complex to class 2 promoters, resulting in decreased expression of class 2 flagellar operons. As a chaperone, effects FliD transition to the membrane by preventing its premature polymerization, and by directing it to the export apparatus. In Citrobacter koseri (strain ATCC BAA-895 / CDC 4225-83 / SGSC4696), this protein is Flagellar protein FliT.